Consider the following 89-residue polypeptide: Exodeoxyribonuclease 7 small subunit (89 aa).

The segment at 1–22 is disordered; it reads MRKKSSSNKEETALHPPPENFE.

The protein belongs to the XseB family. Heterooligomer composed of large and small subunits.

It localises to the cytoplasm. It carries out the reaction Exonucleolytic cleavage in either 5'- to 3'- or 3'- to 5'-direction to yield nucleoside 5'-phosphates.. Bidirectionally degrades single-stranded DNA into large acid-insoluble oligonucleotides, which are then degraded further into small acid-soluble oligonucleotides. The polypeptide is Exodeoxyribonuclease 7 small subunit (Nitrosomonas europaea (strain ATCC 19718 / CIP 103999 / KCTC 2705 / NBRC 14298)).